Consider the following 461-residue polypeptide: Tol-Pal system protein TolB 2 (461 aa).

The signal sequence occupies residues 1-20 (MKIRHLLLLAGLVSAPAIVA). The segment at 28–47 (SSSAAQASGDDDGGLTGSVS) is disordered.

It belongs to the TolB family. As to quaternary structure, the Tol-Pal system is composed of five core proteins: the inner membrane proteins TolA, TolQ and TolR, the periplasmic protein TolB and the outer membrane protein Pal. They form a network linking the inner and outer membranes and the peptidoglycan layer.

Its subcellular location is the periplasm. In terms of biological role, part of the Tol-Pal system, which plays a role in outer membrane invagination during cell division and is important for maintaining outer membrane integrity. The sequence is that of Tol-Pal system protein TolB 2 from Novosphingobium aromaticivorans (strain ATCC 700278 / DSM 12444 / CCUG 56034 / CIP 105152 / NBRC 16084 / F199).